Consider the following 427-residue polypeptide: Enolase (427 aa).

(2R)-2-phosphoglycerate is bound at residue Q163. E205 functions as the Proton donor in the catalytic mechanism. Positions 242, 285, and 312 each coordinate Mg(2+). (2R)-2-phosphoglycerate-binding residues include K337, R366, S367, and K388. K337 serves as the catalytic Proton acceptor.

Belongs to the enolase family. It depends on Mg(2+) as a cofactor.

Its subcellular location is the cytoplasm. It is found in the secreted. The protein localises to the cell surface. The catalysed reaction is (2R)-2-phosphoglycerate = phosphoenolpyruvate + H2O. Its pathway is carbohydrate degradation; glycolysis; pyruvate from D-glyceraldehyde 3-phosphate: step 4/5. In terms of biological role, catalyzes the reversible conversion of 2-phosphoglycerate (2-PG) into phosphoenolpyruvate (PEP). It is essential for the degradation of carbohydrates via glycolysis. This Bradyrhizobium diazoefficiens (strain JCM 10833 / BCRC 13528 / IAM 13628 / NBRC 14792 / USDA 110) protein is Enolase.